The sequence spans 198 residues: Syndecan-4 (198 aa).

The signal sequence occupies residues 1–23 (MAPACLLAPLLLLLLGGFPLVPG). The Extracellular segment spans residues 24 to 145 (ESIRETEVID…QGSNIFERTE (122 aa)). Disordered stretches follow at residues 42–76 (YFSGALPDDEDAGGSDDFELSGSGDLDDTEEPRPF) and 94–130 (AQPGIRVPSEPKELEENEVIPKRAPSDVGDDMSNKVS). 3 O-linked (Xyl...) (glycosaminoglycan) serine glycosylation sites follow: Ser-44, Ser-62, and Ser-64. The span at 48–71 (PDDEDAGGSDDFELSGSGDLDDTE) shows a compositional bias: acidic residues. Over residues 102 to 118 (SEPKELEENEVIPKRAP) the composition is skewed to basic and acidic residues. The chain crosses the membrane as a helical span at residues 146–170 (VLAALIVGGVVGILFAVFLILLLVY). At 171 to 198 (RMKKKDEGSYDLGKKPIYKKAPTNEFYA) the chain is on the cytoplasmic side.

It belongs to the syndecan proteoglycan family. As to quaternary structure, homodimer. Interacts with CDCP1 and SDCBP. Interacts (via its cytoplasmic domain) with GIPC (via its PDZ domain). Interacts (via its cytoplasmic domain) with NUDT16L1. Interacts with DNM2; this interaction is markedly enhanced at focal ahesion site upon induction of focal adhesions and stress-fiber formation. Shedding is enhanced by a number of factors such as heparanase, thrombin or EGF. Also by stress and wound healing. PMA-mediated shedding is inhibited by TIMP3. In terms of processing, O-glycosylated; contains both chondroitin sulfate and heparan sulfate. Ser-44, Ser-62 and Ser-64 can all be modified by either chondroitin sulfate or heparan sulfate, and the protein exists in forms that contain only chondroitin sulfate, only heparan sulfate and both chondroitin sulfate and heparan sulfate. As to expression, ubiquitous. Highest levels in liver, kidney and lung.

The protein resides in the membrane. It is found in the secreted. In terms of biological role, cell surface proteoglycan which regulates exosome biogenesis in concert with SDCBP and PDCD6IP. The protein is Syndecan-4 of Mus musculus (Mouse).